Reading from the N-terminus, the 479-residue chain is Cardiolipin synthase A (479 aa).

2 helical membrane passes run 8–28 (FFGY…LHAV) and 38–58 (IAWA…YLVF). PLD phosphodiesterase domains follow at residues 218-245 (VNFR…GDEY) and 392-419 (QPGF…DNRS). Active-site residues include histidine 223, lysine 225, aspartate 230, histidine 397, lysine 399, and aspartate 404.

It belongs to the phospholipase D family. Cardiolipin synthase subfamily. ClsA sub-subfamily.

It localises to the cell inner membrane. The catalysed reaction is 2 a 1,2-diacyl-sn-glycero-3-phospho-(1'-sn-glycerol) = a cardiolipin + glycerol. Its function is as follows. Catalyzes the reversible phosphatidyl group transfer from one phosphatidylglycerol molecule to another to form cardiolipin (CL) (diphosphatidylglycerol) and glycerol. The sequence is that of Cardiolipin synthase A from Pseudomonas putida (strain GB-1).